The sequence spans 87 residues: UPF0250 protein plu1293 (87 aa).

This sequence belongs to the UPF0250 family.

This chain is UPF0250 protein plu1293, found in Photorhabdus laumondii subsp. laumondii (strain DSM 15139 / CIP 105565 / TT01) (Photorhabdus luminescens subsp. laumondii).